A 433-amino-acid polypeptide reads, in one-letter code: uncharacterized protein (433 aa).

The protein belongs to the arrestin family.

This is an uncharacterized protein from Schizosaccharomyces pombe (strain 972 / ATCC 24843) (Fission yeast).